The sequence spans 199 residues: MVKMLVLYYSAYGYMEQMAKAAAEGAREGGAEVTLKRVPELVPEEVAKASHYKIDQEVPIATPGELADYDAIIIGTATRYGMMASQMKNFLDQTGGLWAKGALINKVGSVMVSTATQHGGAELALISTQWQMQHHGMIIVPLSYAYREQMGNDVVRGGAPYGMTTTADGDGSRQPSAQELDGARFQGRRVAEITAKLHG.

The 187-residue stretch at Met4–Val190 folds into the Flavodoxin-like domain. FMN-binding positions include Ser10 to Met15 and Thr78 to Tyr80. Tyr12 contacts NAD(+). Residue Trp98 coordinates substrate. FMN contacts are provided by residues Ser113–Gly119 and His134. The interval Gly158 to Asp181 is disordered. Over residues Met163 to Ala177 the composition is skewed to polar residues.

It belongs to the WrbA family. FMN is required as a cofactor.

The enzyme catalyses a quinone + NADH + H(+) = a quinol + NAD(+). It catalyses the reaction a quinone + NADPH + H(+) = a quinol + NADP(+). This chain is NAD(P)H dehydrogenase (quinone), found in Brucella abortus (strain S19).